Consider the following 333-residue polypeptide: Glycerol-3-phosphate dehydrogenase [NAD(P)+] (333 aa).

4 residues coordinate NADPH: Ser13, Trp14, Arg34, and Lys108. The sn-glycerol 3-phosphate site is built by Lys108, Gly137, and Ser139. Ala141 contacts NADPH. Lys192, Asp245, Ser255, Arg256, and Asn257 together coordinate sn-glycerol 3-phosphate. Residue Lys192 is the Proton acceptor of the active site. Residue Arg256 coordinates NADPH. Position 282 (Glu282) interacts with NADPH.

It belongs to the NAD-dependent glycerol-3-phosphate dehydrogenase family.

It is found in the cytoplasm. It catalyses the reaction sn-glycerol 3-phosphate + NAD(+) = dihydroxyacetone phosphate + NADH + H(+). The catalysed reaction is sn-glycerol 3-phosphate + NADP(+) = dihydroxyacetone phosphate + NADPH + H(+). The protein operates within membrane lipid metabolism; glycerophospholipid metabolism. Catalyzes the reduction of the glycolytic intermediate dihydroxyacetone phosphate (DHAP) to sn-glycerol 3-phosphate (G3P), the key precursor for phospholipid synthesis. The polypeptide is Glycerol-3-phosphate dehydrogenase [NAD(P)+] (Thioalkalivibrio sulfidiphilus (strain HL-EbGR7)).